The following is a 501-amino-acid chain: Aspartate--tRNA ligase, cytoplasmic (501 aa).

T52 is subject to Phosphothreonine. K74 carries the post-translational modification N6-acetyllysine. E229 provides a ligand contact to L-aspartate. At S249 the chain carries Phosphoserine. Residues 251–254 (QLYK) form an aspartate region. R273 lines the L-aspartate pocket. Residues 273–275 (RAE) and 281–283 (RHL) contribute to the ATP site. Residue K374 is modified to N6-acetyllysine. Residue E424 participates in ATP binding. The L-aspartate site is built by S427 and R431. 472–475 (GLER) serves as a coordination point for ATP.

It belongs to the class-II aminoacyl-tRNA synthetase family. Type 2 subfamily. As to quaternary structure, homodimer. Part of a multisubunit complex that groups tRNA ligases for Arg (RARS1), Asp (DARS1), Gln (QARS1), Ile (IARS1), Leu (LARS1), Lys (KARS1), Met (MARS1) the bifunctional ligase for Glu and Pro (EPRS1) and the auxiliary subunits AIMP1/p43, AIMP2/p38 and EEF1E1/p18.

The protein resides in the cytoplasm. It catalyses the reaction tRNA(Asp) + L-aspartate + ATP = L-aspartyl-tRNA(Asp) + AMP + diphosphate. Catalyzes the specific attachment of an amino acid to its cognate tRNA in a 2 step reaction: the amino acid (AA) is first activated by ATP to form AA-AMP and then transferred to the acceptor end of the tRNA. This is Aspartate--tRNA ligase, cytoplasmic (Dars1) from Rattus norvegicus (Rat).